We begin with the raw amino-acid sequence, 355 residues long: Peptide chain release factor 1 (355 aa).

At glutamine 231 the chain carries N5-methylglutamine. The segment at 283–303 (LAKESEARKSQVGSGDRSERI) is disordered.

The protein belongs to the prokaryotic/mitochondrial release factor family. Methylated by PrmC. Methylation increases the termination efficiency of RF1.

The protein localises to the cytoplasm. Peptide chain release factor 1 directs the termination of translation in response to the peptide chain termination codons UAG and UAA. In Campylobacter lari (strain RM2100 / D67 / ATCC BAA-1060), this protein is Peptide chain release factor 1.